Here is a 218-residue protein sequence, read N- to C-terminus: Uracil-DNA glycosylase (218 aa).

Residue Asp-68 is the Proton acceptor of the active site.

The protein belongs to the uracil-DNA glycosylase (UDG) superfamily. UNG family. In terms of assembly, homodimer. Interacts with protein OPG148. Component of the Uracil-DNA glycosylase(UDG)-OPG148-polymerase complex; OPG148 and UDG form a heterodimeric processivity factor that associates with OPG71 to form the processive polymerase holoenzyme.

The enzyme catalyses Hydrolyzes single-stranded DNA or mismatched double-stranded DNA and polynucleotides, releasing free uracil.. In terms of biological role, plays an essential role in viral replication as a component of the DNA polymerase processivity factor. Excises uracil residues from the DNA which can arise as a result of misincorporation of dUMP residues by DNA polymerase or due to deamination of cytosine. The protein is Uracil-DNA glycosylase (OPG116) of Variola virus.